We begin with the raw amino-acid sequence, 348 residues long: L-seryl-tRNA(Sec) kinase (348 aa).

25 to 32 (GLPAAGKS) is a binding site for ATP.

It belongs to the L-seryl-tRNA(Sec) kinase family. It depends on Mg(2+) as a cofactor.

It carries out the reaction L-seryl-tRNA(Sec) + ATP = O-phospho-L-seryl-tRNA(Sec) + ADP. It functions in the pathway aminoacyl-tRNA biosynthesis; selenocysteinyl-tRNA(Sec) biosynthesis; selenocysteinyl-tRNA(Sec) from L-seryl-tRNA(Sec) (archaeal/eukaryal route): step 1/2. Its function is as follows. Specifically phosphorylates seryl-tRNA(Sec) to O-phosphoseryl-tRNA(Sec), an activated intermediate for selenocysteine biosynthesis. The sequence is that of L-seryl-tRNA(Sec) kinase (PSTK) from Homo sapiens (Human).